Consider the following 59-residue polypeptide: UPF0434 protein RHOS4_00640 (59 aa).

It belongs to the UPF0434 family.

The sequence is that of UPF0434 protein RHOS4_00640 from Cereibacter sphaeroides (strain ATCC 17023 / DSM 158 / JCM 6121 / CCUG 31486 / LMG 2827 / NBRC 12203 / NCIMB 8253 / ATH 2.4.1.) (Rhodobacter sphaeroides).